Consider the following 113-residue polypeptide: MFTDWKEHTSHVKKSFGELGKQYPKMLQAYQALGAAAAEGNVLDAKTRELIALAVAVTTRCESCISAHAEEAVKAGASEAEVAAALATAIALNAGAAYTYSLRALEAYSVQKA.

This is an uncharacterized protein from Haemophilus influenzae (strain ATCC 51907 / DSM 11121 / KW20 / Rd).